A 130-amino-acid polypeptide reads, in one-letter code: Small ribosomal subunit protein uS8 (130 aa).

Belongs to the universal ribosomal protein uS8 family. As to quaternary structure, part of the 30S ribosomal subunit. Contacts proteins S5 and S12.

Its function is as follows. One of the primary rRNA binding proteins, it binds directly to 16S rRNA central domain where it helps coordinate assembly of the platform of the 30S subunit. This Sodalis glossinidius (strain morsitans) protein is Small ribosomal subunit protein uS8.